A 35-amino-acid chain; its full sequence is Photosystem II reaction center protein T (35 aa).

A helical transmembrane segment spans residues alanine 3–phenylalanine 23.

Belongs to the PsbT family. PSII is composed of 1 copy each of membrane proteins PsbA, PsbB, PsbC, PsbD, PsbE, PsbF, PsbH, PsbI, PsbJ, PsbK, PsbL, PsbM, PsbT, PsbY, PsbZ, Psb30/Ycf12, at least 3 peripheral proteins of the oxygen-evolving complex and a large number of cofactors. It forms dimeric complexes.

The protein localises to the plastid. It localises to the chloroplast thylakoid membrane. Its function is as follows. Found at the monomer-monomer interface of the photosystem II (PS II) dimer, plays a role in assembly and dimerization of PSII. PSII is a light-driven water plastoquinone oxidoreductase, using light energy to abstract electrons from H(2)O, generating a proton gradient subsequently used for ATP formation. In Pisum sativum (Garden pea), this protein is Photosystem II reaction center protein T.